The sequence spans 302 residues: MNICGPQRYDKENNTCFNVDQLVEMAKAYNRYLSKTKLNPSRNYHFGDADLINIKSDKKYLLKQFKDRFGKICGSDEICLTHQAFMGELVGEMKDDILFGTFRSEGPSKSTEWLSTIDINQIMVPYENIYPNFKFIGAVPADCDQVSVCPLYNINYDKLMDEGINYIATIFNHDRYGQPGSHWVAMFVDINNGKLYYCDSNGKEPTKYIENSIEKFAQFYKRKTGNDIIYKYNKNSYQKDGSECGVYSCNFIIRMLSGEPFDNIVSNSLSFQEINSCRNVYFRNQPSKFKPHKLCDPTNSGK.

Active-site residues include His-182 and Asp-199. The active-site Nucleophile is Cys-244.

This sequence belongs to the peptidase C48 family.

It is found in the virion. The protein is Putative thiol protease R355 of Acanthamoeba polyphaga mimivirus (APMV).